The chain runs to 238 residues: Thymidine kinase, cytosolic (238 aa).

The residue at position 2 (S2) is an N-acetylserine. Phosphoserine occurs at positions 2 and 13. ATP-binding positions include 26-33 (GPMFSGKS), 58-60 (DTR), and 97-100 (DEGQ). Catalysis depends on E98, which acts as the Proton acceptor. F128 provides a ligand contact to substrate. Zn(2+)-binding residues include C153 and C156. Residues 172 to 176 (VEVIG) and Y181 each bind substrate. Zn(2+) contacts are provided by C185 and C188. Residues 206–208 (KEN) carry the KEN box motif. Phosphoserine is present on S235.

Belongs to the thymidine kinase family. Homotetramer. Tetramerization from dimerization is induced by ATP and increases catalytic efficiency due to a high affinity for thymidine. Tetramerization is inhibited by phosphorylation at Ser-13. Interacts (via the KEN box) with FZR1. Post-translationally, phosphorylated on Ser-13 in mitosis. Phosphorylation of Ser-13 by CDK1 during mitosis reduces homotetramerization and catalytic efficiency when DNA replication is complete and intracellular TK1 is still present at a high level. Polyubiquitinated. Postmitosis, ubiquitination leads to proteasomal degradation. The KEN box sequence located at the C-terminal region targets for degradation by the anaphase promoting complex (APC/C) activated and rate-limited by FZR1.

It localises to the cytoplasm. It catalyses the reaction thymidine + ATP = dTMP + ADP + H(+). In terms of biological role, cell-cycle-regulated enzyme of importance in nucleotide metabolism. Catalyzes the first enzymatic step in the salvage pathway converting thymidine into thymidine monophosphate. Transcriptional regulation limits expression to the S phase of the cell cycle and transient expression coincides with the oscillation in the intracellular dTTP concentration. This is Thymidine kinase, cytosolic (TK1) from Bos taurus (Bovine).